Here is a 136-residue protein sequence, read N- to C-terminus: Probable disulfide formation protein (136 aa).

A helical transmembrane segment spans residues 7–26 (NNALYFAWLICSTGTVMSIY). A disulfide bridge connects residues Cys-36 and Cys-39. The next 2 membrane-spanning stretches (helical) occupy residues 41 to 60 (YQRI…TYRE) and 67 to 84 (YALP…YQIC). Cys-96 and Cys-101 form a disulfide bridge. The chain crosses the membrane as a helical span at residues 109–133 (GFITVPMASALAFCAISCLLILSGS).

The protein belongs to the DsbB family. BdbC subfamily.

Its subcellular location is the cell inner membrane. Required for disulfide bond formation in some proteins. The polypeptide is Probable disulfide formation protein (Chlamydia caviae (strain ATCC VR-813 / DSM 19441 / 03DC25 / GPIC) (Chlamydophila caviae)).